The following is a 466-amino-acid chain: MSQEIWADVLAYVRKNVSDLEYTTWFAPVKPLGVQEGSLLLGVRNSFTKDWFRDHYLELLLAALRSLGAEHPQVEFQVLPAAQDALLLPNDPPPAPEAAAPTPKTKAAPTPPPSTPGDNRKTLNPKYTFENFVVGPNNNLAHAAALAVAESPGKAYNPLFIYGDVGLGKTHLMHAVGHYLAERFPEKRIEYVSTETFTNELINAIRDDKTTQFRNRYRSVDLLLVDDIQFLAGKERTQEEFFHTFNALYESNKQIILSSDRPPKDIQTLEGRLRSRFEWGLITDIQSPEYETRVAILKMNAEQGHITIPQEVLELIARQVTSNIRELEGALMRVVAFASLNNVPFSRAAAAKALSNVFAPQEAKVEMTDVLRQVAAHYGTTPDLIRGSGRARDIVVPRQVAQYLIRALTDHSLPEIGQFFGRDHSTVMHAVSKITEQMGKDPELAATVNTLRNRIQGKEEEEEVGA.

The tract at residues 1–77 (MSQEIWADVL…GAEHPQVEFQ (77 aa)) is domain I, interacts with DnaA modulators. The interval 77 to 121 (QVLPAAQDALLLPNDPPPAPEAAAPTPKTKAAPTPPPSTPGDNRK) is domain II. A disordered region spans residues 87–122 (LLPNDPPPAPEAAAPTPKTKAAPTPPPSTPGDNRKT). Over residues 97–108 (EAAAPTPKTKAA) the composition is skewed to low complexity. Positions 122 to 338 (TLNPKYTFEN…GALMRVVAFA (217 aa)) are domain III, AAA+ region. 4 residues coordinate ATP: Gly-166, Gly-168, Lys-169, and Thr-170. Residues 339–466 (SLNNVPFSRA…GKEEEEEVGA (128 aa)) form a domain IV, binds dsDNA region.

It belongs to the DnaA family. Oligomerizes as a right-handed, spiral filament on DNA at oriC.

It is found in the cytoplasm. Plays an essential role in the initiation and regulation of chromosomal replication. ATP-DnaA binds to the origin of replication (oriC) to initiate formation of the DNA replication initiation complex once per cell cycle. Binds the DnaA box (a 9 base pair repeat at the origin) and separates the double-stranded (ds)DNA. Forms a right-handed helical filament on oriC DNA; dsDNA binds to the exterior of the filament while single-stranded (ss)DNA is stabiized in the filament's interior. The ATP-DnaA-oriC complex binds and stabilizes one strand of the AT-rich DNA unwinding element (DUE), permitting loading of DNA polymerase. After initiation quickly degrades to an ADP-DnaA complex that is not apt for DNA replication. Binds acidic phospholipids. In terms of biological role, strand separation requires the DnaA boxes and adjacent DnaA-trio motifs but works equally well with ADP or ATP. The chain is Chromosomal replication initiator protein DnaA from Deinococcus radiodurans (strain ATCC 13939 / DSM 20539 / JCM 16871 / CCUG 27074 / LMG 4051 / NBRC 15346 / NCIMB 9279 / VKM B-1422 / R1).